The primary structure comprises 698 residues: RNA cytosine-C(5)-methyltransferase NSUN2 (698 aa).

Over residues 1 to 10 the composition is skewed to basic residues; sequence MGRKNRRNRQ. The disordered stretch occupies residues 1-28; it reads MGRKNRRNRQRRTEQRSPAEEERRKARE. The segment covering 11–28 has biased composition (basic and acidic residues); that stretch reads RRTEQRSPAEEERRKARE. Residues 182 to 188, aspartate 213, aspartate 240, and aspartate 266 each bind S-adenosyl-L-methionine; that span reads CAAPGSK. The Nucleophile role is filled by cysteine 319. The segment at 472-496 is disordered; the sequence is AVDAENGETKPCTNQSGSSKTDSVC. Polar residues predominate over residues 482-493; that stretch reads PCTNQSGSSKTD.

The protein belongs to the class I-like SAM-binding methyltransferase superfamily. RsmB/NOP family. TRM4 subfamily.

Its subcellular location is the nucleus. It localises to the nucleolus. The protein localises to the cytoplasm. The protein resides in the mitochondrion. It is found in the cytoskeleton. Its subcellular location is the spindle. It localises to the secreted. The protein localises to the extracellular exosome. It carries out the reaction cytidine(48) in tRNA + S-adenosyl-L-methionine = 5-methylcytidine(48) in tRNA + S-adenosyl-L-homocysteine + H(+). It catalyses the reaction cytidine(49) in tRNA + S-adenosyl-L-methionine = 5-methylcytidine(49) in tRNA + S-adenosyl-L-homocysteine + H(+). The enzyme catalyses cytidine(50) in tRNA + S-adenosyl-L-methionine = 5-methylcytidine(50) in tRNA + S-adenosyl-L-homocysteine + H(+). The catalysed reaction is cytidine(34) in tRNA precursor + S-adenosyl-L-methionine = 5-methylcytidine(34) in tRNA precursor + S-adenosyl-L-homocysteine + H(+). It carries out the reaction a cytidine in mRNA + S-adenosyl-L-methionine = a 5-methylcytidine in mRNA + S-adenosyl-L-homocysteine + H(+). RNA cytosine C(5)-methyltransferase that methylates cytosine to 5-methylcytosine (m5C) in various RNAs, such as tRNAs, mRNAs and some long non-coding RNAs (lncRNAs). Involved in various processes, such as epidermal stem cell differentiation, testis differentiation and maternal to zygotic transition during early development: acts by increasing protein synthesis; cytosine C(5)-methylation promoting tRNA stability and preventing mRNA decay. Methylates cytosine to 5-methylcytosine (m5C) at positions 34 and 48 of intron-containing tRNA(Leu)(CAA) precursors, and at positions 48, 49 and 50 of tRNA(Gly)(GCC) precursors. tRNA methylation is required generation of RNA fragments derived from tRNAs (tRFs). Also mediates C(5)-methylation of mitochondrial tRNAs. Catalyzes cytosine C(5)-methylation of mRNAs, leading to stabilize them and prevent mRNA decay. Cytosine C(5)-methylation of mRNAs also regulates mRNA export. Also mediates cytosine C(5)-methylation of non-coding RNAs, such as vault RNAs (vtRNAs), promoting their processing into regulatory small RNAs. Required for proper spindle assembly and chromosome segregation, independently of its methyltransferase activity. The polypeptide is RNA cytosine-C(5)-methyltransferase NSUN2 (Xenopus laevis (African clawed frog)).